The sequence spans 485 residues: Argininosuccinate lyase (485 aa).

The protein belongs to the lyase 1 family. Argininosuccinate lyase subfamily.

The protein localises to the cytoplasm. It carries out the reaction 2-(N(omega)-L-arginino)succinate = fumarate + L-arginine. It functions in the pathway amino-acid biosynthesis; L-arginine biosynthesis; L-arginine from L-ornithine and carbamoyl phosphate: step 3/3. The sequence is that of Argininosuccinate lyase from Halobacterium salinarum (strain ATCC 29341 / DSM 671 / R1).